A 1958-amino-acid polypeptide reads, in one-letter code: MADRTAPRCQLRLEWVYGYRGHQCRNNLYYTAGKEVVYFVAGVGVVYNTREHSQKFFLGHNDDIISLALHPDKTLVATGQVGKEPYICIWDSYNVQTVSLLKDVHTHGVACLAFDSDGQRLASVGLDAKNTVCIWDWRKGKLLASATGHSDRIFDISWDPYQPNRVVSCGVKHIKFWTLCGNALTAKRGIFGKTGDLQTILCLACAKEDITYSGALNGDIYVWKGLNLVRTIQGAHSAGIFSMYACEEGFATGGRDGCIRLWDTDFKPITKIDLRETEQGYKGLSIRSVCWKADRLLAGTQDSEIFEVIVRERDKPMLILQGHCEGELWALALHPKKPLAVTGSDDRSVRLWSLADHALIARCNMEEAVRSVAFSPDGSQLALGMKDGSFIVLRVRDMTEVVHIKDRKEVIHEMKFSPDGSYLAVGSNDGPVDVYAVAQRYKKIGECSKSLSFITHIDWSLDSKYLQTNDGAGERLFYRMPSGKPLTSKEEIKGIPWASWTCVKGPEVSGIWPKYTEVTDINSVDANYNSSVLVSGDDFGLVKLFKFPCLKRGAKFRKYVGHSAHVTNVRWSHDFQWVLSTGGADHSVFQWRFIPEGVSNGMLETAPQEGGADSYSEESDSDLSDVPELDSDIEQEAQINYDRQVYKEDLPQLKQQSKEKNHAVPFLKREKAPEDSLKLQFIHGYRGYDCRNNLFYTQAGEVVYHIAAVAVVYNRQQHSQRLYLGHDDDILSLTIHPVKDYVATGQVGRDAAIHVWDTQTLKCLSLLKGQHQRGVCALDFSADGKCLVSVGLDDFHSIVFWDWKKGEKIATTRGHKDKIFVVKCNPHHVDKLVTVGIKHIKFWQQAGGGFTSKRGTFGSVGKLETMMCVSYGRMEDLVFSGAATGDIFIWKDILLLKTVKAHDGPVFAMYALDKGFVTGGKDGIVELWDDMFERCLKTYAIKRSALSTSSKGLLLEDNPSIRAITLGHGHILVGTKNGEILEIDKSGPMTLLVQGHMEGEVWGLAAHPLLPICATVSDDKTLRIWELSAQHRMLAVRKLKKGGRCCAFSPDGKALAVGLNDGSFLVVNADTVEDMVSFHHRKEMISDIKFSKDTGKYLAVASHDNFVDIYNVLTSKRVGICKGASSYITHIDWDSRGKLLQVNSGAREQLFFEAPRGKRHIIRPSEIEKIEWDTWTCVLGPTCEGIWPAHSDITDVNAASLTKDCSLLATGDDFGFVKLFSYPVKGQHARFKKYVGHSAHVTNVRWLHNDSVLLTVGGADTALMIWTREFVGTQESKLVDSEESDTDVEEDGGYDSDVAREKAIDYTTKIYAVSIREMEGTKPHQQLKEVSVEERPPVSRAAPQPEKLQKNNITKKKKLVEELALDHVFGYRGFDCRNNLHYLNDGADIIFHTAAAGIVQNLSTGSQSFYLEHTDDILCLTVNQHPKYRNVVATSQIGTTPSIHIWDAMTKHTLSMLRCFHSKGVNYINFSATGKLLVSVGVDPEHTITVWRWQEGAKVASRGGHLERIFVVEFRPDSDTQFVSVGVKHMKFWTLAGSALLYKKGVIGSLGAAKMQTMLSVAFGANNLTFTGAINGDVYVWKDHFLIRLVAKAHTGPVFTMYTTLRDGLIVTGGKERPTKEGGAVKLWDQEMKRCRAFQLETGQLVECVRSVCRGKGKILVGTKDGEIIEVGEKNAASNILIDGHMEGEIWGLATHPSKDLFISASNDGTARIWDLADKKLLNKVSLGHAARCAAYSPDGEMVAIGMKNGEFVILLVNSLKVWGKKRDRKSAIQDIRISPDNRFLAVGSSEHTVDFYDLTQGTNLNRIGYCKDIPSFVIQMDFSADGKYIQVSTGAYKRQVHEVPLGKQVTEAVVIEKITWASWTSVLGDEVIGIWPRNADKADVNCACVTHAGLNIVTGDDFGLVKLFDFPCTEKFAKHKRYFGHSAHVTNIRFSYDDKYVVSTGGDDCSVFVWRCL.

WD repeat units lie at residues 59–100 (GHND…TVSL), 104–145 (VHTH…LLAS), 148–187 (GHSDRIFDISWDPYQPNRVVSCGVKHIKFWTLCGNALTAK), 195–233 (GDLQTILCLACAKEDITYSGALNGDIYVWKGLNLVRTIQ), 235–273 (AHSAGIFSMYACEEGFATGGRDGCIRLWDTDFKPITKID), 280–321 (GYKG…LILQ), 323–362 (HCEGELWALALHPKKPLAVTGSDDRSVRLWSLADHALIAR), 364–403 (NMEEAVRSVAFSPDGSQLALGMKDGSFIVLRVRDMTEVVH), 406–445 (DRKEVIHEMKFSPDGSYLAVGSNDGPVDVYAVAQRYKKIG), and 561–601 (GHSA…VSNG). Residues 603 to 626 (LETAPQEGGADSYSEESDSDLSDV) form a disordered region. Positions 615–626 (YSEESDSDLSDV) are enriched in acidic residues. WD repeat units lie at residues 725-766 (GHDD…CLSL), 770-811 (QHQR…KIAT), 814-853 (GHKDKIFVVKCNPHHVDKLVTVGIKHIKFWQQAGGGFTSK), 861-900 (GKLETMMCVSYGRMEDLVFSGAATGDIFIWKDILLLKTVK), 901-940 (AHDGPVFAMYALDKGFVTGGKDGIVELWDDMFERCLKTYA), 996-1035 (HMEGEVWGLAAHPLLPICATVSDDKTLRIWELSAQHRMLA), 1038-1077 (KLKKGGRCCAFSPDGKALAVGLNDGSFLVVNADTVEDMVS), 1080-1120 (HRKE…RVGI), 1191-1230 (SDITDVNAASLTKDCSLLATGDDFGFVKLFSYPVKGQHAR), and 1236-1276 (GHSA…TQES). Positions 1322-1337 (KPHQQLKEVSVEERPP) are enriched in basic and acidic residues. Positions 1322–1353 (KPHQQLKEVSVEERPPVSRAAPQPEKLQKNNI) are disordered. 10 WD repeats span residues 1412-1456 (EHTD…TLSM), 1460-1501 (FHSK…KVAS), 1504-1543 (GHLERIFVVEFRPDSDTQFVSVGVKHMKFWTLAGSALLYK), 1553-1591 (AKMQTMLSVAFGANNLTFTGAINGDVYVWKDHFLIRLVA), 1593-1638 (AHTG…CRAF), 1685-1724 (HMEGEIWGLATHPSKDLFISASNDGTARIWDLADKKLLNK), 1726-1767 (SLGH…GKKR), 1768-1807 (DRKSAIQDIRISPDNRFLAVGSSEHTVDFYDLTQGTNLNR), 1880-1919 (ADKADVNCACVTHAGLNIVTGDDFGLVKLFDFPCTEKFAK), and 1925-1958 (GHSAHVTNIRFSYDDKYVVSTGGDDCSVFVWRCL).

The protein belongs to the WD repeat EMAP family.

The protein localises to the cytoplasm. Its subcellular location is the cytoskeleton. Its function is as follows. May modify the assembly dynamics of microtubules, such that microtubules are slightly longer, but more dynamic. This is Echinoderm microtubule-associated protein-like 6 (EML6) from Homo sapiens (Human).